Reading from the N-terminus, the 200-residue chain is Protein GrpE (200 aa).

The segment at 15–47 (DLEMDLNEEELEESEVNEDKEFEELDKSEEENE) is disordered. The span at 16 to 47 (LEMDLNEEELEESEVNEDKEFEELDKSEEENE) shows a compositional bias: acidic residues.

Belongs to the GrpE family. Homodimer.

The protein localises to the cytoplasm. Participates actively in the response to hyperosmotic and heat shock by preventing the aggregation of stress-denatured proteins, in association with DnaK and GrpE. It is the nucleotide exchange factor for DnaK and may function as a thermosensor. Unfolded proteins bind initially to DnaJ; upon interaction with the DnaJ-bound protein, DnaK hydrolyzes its bound ATP, resulting in the formation of a stable complex. GrpE releases ADP from DnaK; ATP binding to DnaK triggers the release of the substrate protein, thus completing the reaction cycle. Several rounds of ATP-dependent interactions between DnaJ, DnaK and GrpE are required for fully efficient folding. The chain is Protein GrpE from Clostridium tetani (strain Massachusetts / E88).